A 636-amino-acid polypeptide reads, in one-letter code: Beta-galactosidase-1-like protein 2 (636 aa).

Positions 1 to 32 (MTTWSLRRRPARTLGLLLLVVLGFLVLRRLDW) are cleaved as a signal peptide. Catalysis depends on Glu201, which acts as the Proton donor. Glu277 (nucleophile) is an active-site residue.

The protein belongs to the glycosyl hydrolase 35 family.

The protein localises to the secreted. This is Beta-galactosidase-1-like protein 2 (GLB1L2) from Homo sapiens (Human).